Here is a 449-residue protein sequence, read N- to C-terminus: tRNA modification GTPase MnmE (449 aa).

Residues R24, E85, and R124 each contribute to the (6S)-5-formyl-5,6,7,8-tetrahydrofolate site. Positions 220-369 (GIRTAIAGPP…LEEAIIQAFS (150 aa)) constitute a TrmE-type G domain. N230 contacts K(+). GTP contacts are provided by residues 230 to 235 (NVGKSS), 249 to 255 (SNIAGTT), and 274 to 277 (DTAG). S234 provides a ligand contact to Mg(2+). Residues S249, I251, and T254 each coordinate K(+). T255 serves as a coordination point for Mg(2+). K449 serves as a coordination point for (6S)-5-formyl-5,6,7,8-tetrahydrofolate.

Belongs to the TRAFAC class TrmE-Era-EngA-EngB-Septin-like GTPase superfamily. TrmE GTPase family. Homodimer. Heterotetramer of two MnmE and two MnmG subunits. K(+) is required as a cofactor.

It localises to the cytoplasm. Its function is as follows. Exhibits a very high intrinsic GTPase hydrolysis rate. Involved in the addition of a carboxymethylaminomethyl (cmnm) group at the wobble position (U34) of certain tRNAs, forming tRNA-cmnm(5)s(2)U34. This is tRNA modification GTPase MnmE from Akkermansia muciniphila (strain ATCC BAA-835 / DSM 22959 / JCM 33894 / BCRC 81048 / CCUG 64013 / CIP 107961 / Muc).